The primary structure comprises 706 residues: ATP-dependent DNA helicase HMI1, mitochondrial (706 aa).

Residues 5 to 277 (TPSQWKVINK…LKLFDNFRST (273 aa)) enclose the UvrD-like helicase ATP-binding domain. Residues 29 to 34 (GSGKTL) and arginine 275 contribute to the ATP site. In terms of domain architecture, UvrD-like helicase C-terminal spans 278-593 (PEIISLASKI…KLSTIHSAKG (316 aa)). A propeptide spans 693–706 (YSSLRGCKSVFRRI) (cleaved upon import into mitochondrion).

This sequence belongs to the helicase family. UvrD subfamily. It depends on Mg(2+) as a cofactor.

The protein localises to the mitochondrion inner membrane. The catalysed reaction is Couples ATP hydrolysis with the unwinding of duplex DNA by translocating in the 3'-5' direction.. The enzyme catalyses ATP + H2O = ADP + phosphate + H(+). In terms of biological role, required for mitochondrial genome maintenance and mitochondrial DNA inheritance. The sequence is that of ATP-dependent DNA helicase HMI1, mitochondrial (HMI1) from Saccharomyces cerevisiae (strain ATCC 204508 / S288c) (Baker's yeast).